Reading from the N-terminus, the 344-residue chain is 2-aminoethylphosphonate--pyruvate transaminase (344 aa).

Position 194 is an N6-(pyridoxal phosphate)lysine (lysine 194).

It belongs to the class-V pyridoxal-phosphate-dependent aminotransferase family. PhnW subfamily. Homodimer. The cofactor is pyridoxal 5'-phosphate.

It catalyses the reaction (2-aminoethyl)phosphonate + pyruvate = phosphonoacetaldehyde + L-alanine. In terms of biological role, involved in phosphonate degradation. This Bacillus cereus protein is 2-aminoethylphosphonate--pyruvate transaminase.